Here is a 673-residue protein sequence, read N- to C-terminus: Methionine--tRNA ligase (673 aa).

Positions 13–23 (PYANGSIHLGH) match the 'HIGH' region motif. Cysteine 144, cysteine 147, cysteine 157, and cysteine 160 together coordinate Zn(2+). Positions 330 to 334 (KMSKS) match the 'KMSKS' region motif. Lysine 333 contributes to the ATP binding site. Positions 572 to 673 (DFAQLDLRIA…GRARAGMTIS (102 aa)) constitute a tRNA-binding domain.

It belongs to the class-I aminoacyl-tRNA synthetase family. MetG type 1 subfamily. In terms of assembly, homodimer. Zn(2+) is required as a cofactor.

Its subcellular location is the cytoplasm. It carries out the reaction tRNA(Met) + L-methionine + ATP = L-methionyl-tRNA(Met) + AMP + diphosphate. Functionally, is required not only for elongation of protein synthesis but also for the initiation of all mRNA translation through initiator tRNA(fMet) aminoacylation. This is Methionine--tRNA ligase from Dichelobacter nodosus (strain VCS1703A).